We begin with the raw amino-acid sequence, 105 residues long: Nucleoid-associated protein SSP2277 (105 aa).

Positions 1-41 are disordered; sequence MRGGGNMQQMMKQMQKMQKKMGEEQEKLKEEKVQGTAGGGM. A compositionally biased stretch (low complexity) spans 7-16; that stretch reads MQQMMKQMQK. Residues 20–33 show a composition bias toward basic and acidic residues; it reads KMGEEQEKLKEEKV.

This sequence belongs to the YbaB/EbfC family. As to quaternary structure, homodimer.

The protein resides in the cytoplasm. The protein localises to the nucleoid. Binds to DNA and alters its conformation. May be involved in regulation of gene expression, nucleoid organization and DNA protection. The sequence is that of Nucleoid-associated protein SSP2277 from Staphylococcus saprophyticus subsp. saprophyticus (strain ATCC 15305 / DSM 20229 / NCIMB 8711 / NCTC 7292 / S-41).